A 361-amino-acid polypeptide reads, in one-letter code: Adenosine kinase (361 aa).

The short motif at 7-15 is the Nuclear localization signal element; it reads PKPKKLKVE. D34 provides a ligand contact to adenosine. S48 is a Mg(2+) binding site. Y76 carries the post-translational modification Phosphotyrosine. Residue N147 coordinates Mg(2+). Q305 serves as a coordination point for adenosine. D316 is a catalytic residue. D316 (proton acceptor) is an active-site residue.

Belongs to the carbohydrate kinase PfkB family. In terms of assembly, monomer. Mg(2+) is required as a cofactor.

The protein resides in the nucleus. It catalyses the reaction adenosine + ATP = AMP + ADP + H(+). It participates in purine metabolism; AMP biosynthesis via salvage pathway; AMP from adenosine: step 1/1. Its function is as follows. Catalyzes the phosphorylation of the purine nucleoside adenosine at the 5' position in an ATP-dependent manner. Serves as a potential regulator of concentrations of extracellular adenosine and intracellular adenine nucleotides. The protein is Adenosine kinase (Adk) of Rattus norvegicus (Rat).